The following is a 442-amino-acid chain: Mirror-image polydactyly gene 1 protein (442 aa).

Residues 1–39 are disordered; sequence MENWSKDITHSYLEQETTGINKSTQPDEQLTMNSEKSMH. A compositionally biased stretch (polar residues) spans 12 to 35; it reads YLEQETTGINKSTQPDEQLTMNSE. 2 coiled-coil regions span residues 107–212 and 253–435; these read SDKE…LENI and ECKM…KVGT.

Expressed very weakly in heart, liver, skeletal muscle, kidney, pancreas and fetal kidney. Not detected in brain, placenta and lung.

This chain is Mirror-image polydactyly gene 1 protein (MIPOL1), found in Homo sapiens (Human).